The following is a 214-amino-acid chain: tRNA (guanine-N(7)-)-methyltransferase (214 aa).

S-adenosyl-L-methionine contacts are provided by Glu43, Glu68, Asp95, and Asp117. Residue Asp117 is part of the active site. Substrate contacts are provided by residues Lys121, Asp153, and 190-193; that span reads TEYE.

Belongs to the class I-like SAM-binding methyltransferase superfamily. TrmB family.

The catalysed reaction is guanosine(46) in tRNA + S-adenosyl-L-methionine = N(7)-methylguanosine(46) in tRNA + S-adenosyl-L-homocysteine. The protein operates within tRNA modification; N(7)-methylguanine-tRNA biosynthesis. Functionally, catalyzes the formation of N(7)-methylguanine at position 46 (m7G46) in tRNA. This is tRNA (guanine-N(7)-)-methyltransferase from Staphylococcus aureus (strain USA300).